Here is a 915-residue protein sequence, read N- to C-terminus: Probable serine/threonine-protein kinase dyrk2 (915 aa).

Low complexity-rich tracts occupy residues 51–79, 108–119, 170–185, and 196–218; these read TSNT…PTIS, SSSKSSSNSSSI, SSSS…STTS, and SSNS…SGSS. Disordered stretches follow at residues 51 to 119, 132 to 334, and 349 to 533; these read TSNT…SSSI, FSSS…SKSS, and AIKS…PTKS. Residues 234-260 are compositionally biased toward polar residues; that stretch reads PSHTISDSPRSSTMKSRSVSISNGSLF. Composition is skewed to low complexity over residues 261–287, 300–333, 352–364, 379–391, 399–425, and 433–533; these read SPTN…SSIS, SSST…PSKS, SRSL…LARV, SSSS…SFSS, SSSK…ASKI, and SLSS…PTKS. Residues 605-902 enclose the Protein kinase domain; that stretch reads FEIVSILGQG…AEQGLKHDWI (298 aa). ATP is bound by residues 611 to 619 and Lys-634; that span reads LGQGSFCQV. Asp-731 (proton acceptor) is an active-site residue.

Belongs to the protein kinase superfamily. CMGC Ser/Thr protein kinase family. MNB/DYRK subfamily.

The enzyme catalyses L-seryl-[protein] + ATP = O-phospho-L-seryl-[protein] + ADP + H(+). The catalysed reaction is L-threonyl-[protein] + ATP = O-phospho-L-threonyl-[protein] + ADP + H(+). It catalyses the reaction L-tyrosyl-[protein] + ATP = O-phospho-L-tyrosyl-[protein] + ADP + H(+). The sequence is that of Probable serine/threonine-protein kinase dyrk2 (dyrk2) from Dictyostelium discoideum (Social amoeba).